We begin with the raw amino-acid sequence, 356 residues long: MFYLIASAEGFSRLFNLIRYITFRTGAAAITALLIGLIFGPRFIGWMRIHQHKGQPIRDDGPKTHLAKAGTPTMGGLMILIAVSISLFLWMDFANPYVWACIAVMLGFGVIGFIDDYDKVTQNSTRGVSGKVRLLWEFGIAFFACYLILKDGNTQLYLPFYNGPVIDLGWFYYPFAAFVIVGTANSVNLTDGLDGLATMPVIIASLAFFVISYVVGNAVFAHYLGIPHVPGAGELTILTGAIIGAGFAFLWFNAPPAAIFMGDTGSLALGGCLGTIAVATHHEIVLGIVGGLFVAEALSVIIQVGFYKRFKRRVFRMAPLHHHFEQLGWSEPTVVIRFWIISFALALLGLATLKLR.

A run of 9 helical transmembrane segments spans residues 27 to 47, 74 to 94, 97 to 117, 128 to 148, 164 to 184, 201 to 221, 241 to 261, 284 to 304, and 333 to 353; these read AAAITALLIGLIFGPRFIGWM, MGGLMILIAVSISLFLWMDFA, YVWACIAVMLGFGVIGFIDDY, VSGKVRLLWEFGIAFFACYLI, PVIDLGWFYYPFAAFVIVGTA, VIIASLAFFVISYVVGNAVFA, AIIGAGFAFLWFNAPPAAIFM, IVLGIVGGLFVAEALSVIIQV, and TVVIRFWIISFALALLGLATL.

It belongs to the glycosyltransferase 4 family. MraY subfamily. Requires Mg(2+) as cofactor.

Its subcellular location is the cell inner membrane. It carries out the reaction UDP-N-acetyl-alpha-D-muramoyl-L-alanyl-gamma-D-glutamyl-meso-2,6-diaminopimeloyl-D-alanyl-D-alanine + di-trans,octa-cis-undecaprenyl phosphate = di-trans,octa-cis-undecaprenyl diphospho-N-acetyl-alpha-D-muramoyl-L-alanyl-D-glutamyl-meso-2,6-diaminopimeloyl-D-alanyl-D-alanine + UMP. It participates in cell wall biogenesis; peptidoglycan biosynthesis. Functionally, catalyzes the initial step of the lipid cycle reactions in the biosynthesis of the cell wall peptidoglycan: transfers peptidoglycan precursor phospho-MurNAc-pentapeptide from UDP-MurNAc-pentapeptide onto the lipid carrier undecaprenyl phosphate, yielding undecaprenyl-pyrophosphoryl-MurNAc-pentapeptide, known as lipid I. This is Phospho-N-acetylmuramoyl-pentapeptide-transferase from Zymomonas mobilis subsp. mobilis (strain ATCC 31821 / ZM4 / CP4).